A 314-amino-acid polypeptide reads, in one-letter code: Protein OPG185 (314 aa).

Positions 1 to 16 are cleaved as a signal peptide; sequence MTRLPILLLLISLVYA. The Ig-like V-type domain occupies 17–121; it reads TPFPQTSKKI…NDTDKVDYEE (105 aa). Residues 17-278 are Virion surface-facing; the sequence is TPFPQTSKKI…SNYKTKDFVE (262 aa). A disulfide bridge connects residues Cys-34 and Cys-103. N-linked (GlcNAc...) asparagine; by host glycosylation is found at Asn-37, Asn-69, Asn-112, and Asn-161. The segment covering 193-202 has biased composition (polar residues); the sequence is NTVSASSGES. Residues 193–214 form a disordered region; that stretch reads NTVSASSGESTTDETPEPITDK. N-linked (GlcNAc...) asparagine; by host glycosylation occurs at Asn-253. Residues 279 to 302 form a helical membrane-spanning segment; that stretch reads IFGITALIILSAVAIFCITYYIYN. The Intravirion portion of the chain corresponds to 303–314; it reads KRSRKYKTENKV.

The protein belongs to the orthopoxvirus OPG185 family. In terms of assembly, heterodimerizes with OPG040. The heterodimer OPG185-OPG040 interacts with components of the entry fusion complex OPG143 and OPG094. Heterodimer with C3/VPC protein; disulfide-linked. In terms of processing, glycosylated; contains phosphate and sulfate-substituted glycans. O-glycosylation is required for hemagglutination and hemadsorption activities of infected cell membranes.

Its subcellular location is the virion membrane. The protein resides in the host membrane. Functionally, prevents cell to cell fusion by interacting with and directing the viral OPG040 protein on the host plasma membrane. The OPG185-OPG040 complex associates with components of the entry fusion complex (EFC) presumably to avoid superinfection and syncytium formation. Via its interaction with C3/VCP protein, protects the infected cell and probably also the extracellular enveloped virus from complement attack. This is Protein OPG185 (OPG185) from Bos taurus (Bovine).